The chain runs to 301 residues: MAGGGGAGSKVSVAAVQFACTDVESENVDTAERLIREAHKKGANIVLVQELFEGQYFCQAQRLDFFQRAKPYKGNPTIIRFQKLAKELEVVIPVSFFEEANNAHYNSVAIIDADGTDLGLYRKSHIPDGPGYQEKFYFNPGDTGFKAFKTKYATIGVGICWDQWFPECARAMVLQGAEILFYPTAIGSEPQDNNLDSREHWKRVMQGHAGANLVPLVASNRIGRETVETEHGESTITFFGNSFIAGPTGEIVKLANDKDEDVLVAEFDLDEIKSTRHGWGIFRDRRPDLYKVLLTLDGEKS.

Residues 11-269 (VSVAAVQFAC…EDVLVAEFDL (259 aa)) enclose the CN hydrolase domain. Catalysis depends on glutamate 50, which acts as the Proton acceptor. The Proton donor role is filled by lysine 123. The active-site Nucleophile is cysteine 160.

The protein belongs to the carbon-nitrogen hydrolase superfamily. Homooctamer.

The catalysed reaction is N-carbamoylputrescine + H2O + 2 H(+) = putrescine + NH4(+) + CO2. Its pathway is amine and polyamine biosynthesis; putrescine biosynthesis via agmatine pathway; putrescine from N-carbamoylputrescine (amidase route): step 1/1. In terms of biological role, involved in polyamine biosynthesis. The polypeptide is N-carbamoylputrescine amidase (CPA) (Oryza sativa subsp. japonica (Rice)).